The chain runs to 976 residues: 3-O-beta-L-arabinopyranosyl-alpha-L-arabinofuranosidase (976 aa).

Positions 1 to 28 (MSHRNKALVAIVAGTALLISSGAAIGQA) are cleaved as a signal peptide. Glutamate 190 serves as the catalytic Proton donor. The active-site Nucleophile is glutamate 315. The 136-residue stretch at 519–654 (LLVEEVENTV…DNTLDKFLLY (136 aa)) folds into the CBM6 domain.

Belongs to the glycosyl hydrolase 39 family.

Its subcellular location is the secreted. It catalyses the reaction Hydrolysis of beta-L-Arap-(1-&gt;3)-L-Araf disaccharides from non-reducing terminals in branches of type II arabinogalactan attached to proteins.. Functionally, hydrolase involved in the degradation of the gum arabic arabinogalactan protein (AGP) and larch AGP. Catalyzes the release of 3-O-beta-L-arabinopyranosyl-L-arabinose (beta-L-Arap-(1-&gt;3)-L-Ara) from gum arabic AGP and larch AGP. Also cleaves a small amount of beta-L-Arap-(1-&gt;3)-L-Ara from sugar beet arabinan, but wheat AGP cannot be used as a substrate. Can also release 3-O-alpha-D-galactopyranosyl-L-arabinose (alpha-D-Galp-(1-&gt;3)-L-Ara) from gum arabic AGP, with low efficiency. In Bifidobacterium pseudocatenulatum, this protein is 3-O-beta-L-arabinopyranosyl-alpha-L-arabinofuranosidase.